Consider the following 449-residue polypeptide: Asparagine--tRNA ligase (449 aa).

Belongs to the class-II aminoacyl-tRNA synthetase family. As to quaternary structure, homodimer.

Its subcellular location is the cytoplasm. It catalyses the reaction tRNA(Asn) + L-asparagine + ATP = L-asparaginyl-tRNA(Asn) + AMP + diphosphate + H(+). The protein is Asparagine--tRNA ligase of Deinococcus geothermalis (strain DSM 11300 / CIP 105573 / AG-3a).